Consider the following 586-residue polypeptide: Dual specificity tyrosine-phosphorylation-regulated kinase 3 (586 aa).

The segment covering Met-1 to Ala-13 has biased composition (basic and acidic residues). Positions Met-1–Gly-187 are disordered. The 314-residue stretch at Tyr-208 to Ile-521 folds into the Protein kinase domain. ATP contacts are provided by residues Ile-214–Val-222, Lys-237, and Phe-287–Leu-290. The active-site Proton acceptor is the Asp-334. Tyr-368 is modified (phosphotyrosine). Positions Arg-467–Lys-480 match the Nuclear localization signal motif.

Belongs to the protein kinase superfamily. CMGC Ser/Thr protein kinase family. MNB/DYRK subfamily. In terms of assembly, interacts with SIRT1. Mg(2+) is required as a cofactor. In terms of processing, protein kinase activity is activated following autophosphorylation at Tyr-368. Ubiquitinated at anaphase by the anaphase-promoting complex (APC/C), leading to its degradation by the proteasome. Expressed predominantly in testis. Expressed in late pachytene spermatocytes.

The protein localises to the nucleus. The protein resides in the cytoplasm. It is found in the nucleus speckle. It localises to the cytoplasmic granule. Its subcellular location is the cytoskeleton. The protein localises to the microtubule organizing center. The protein resides in the centrosome. It catalyses the reaction L-seryl-[protein] + ATP = O-phospho-L-seryl-[protein] + ADP + H(+). The catalysed reaction is L-threonyl-[protein] + ATP = O-phospho-L-threonyl-[protein] + ADP + H(+). It carries out the reaction L-tyrosyl-[protein] + ATP = O-phospho-L-tyrosyl-[protein] + ADP + H(+). With respect to regulation, protein kinase activity is activated following autophosphorylation at Tyr-368. In terms of biological role, dual-specificity protein kinase that promotes disassembly of several types of membraneless organelles during mitosis, such as stress granules, nuclear speckles and pericentriolar material. Dual-specificity tyrosine-regulated kinases (DYRKs) autophosphorylate a critical tyrosine residue in their activation loop and phosphorylate their substrate on serine and threonine residues. Acts as a central dissolvase of membraneless organelles during the G2-to-M transition, after the nuclear-envelope breakdown: acts by mediating phosphorylation of multiple serine and threonine residues in unstructured domains of proteins, such as SRRM1 and PCM1. Does not mediate disassembly of all membraneless organelles: disassembly of P-body and nucleolus is not regulated by DYRK3. Dissolution of membraneless organelles at the onset of mitosis is also required to release mitotic regulators, such as ZNF207, from liquid-unmixed organelles where they are sequestered and keep them dissolved during mitosis. Regulates mTORC1 by mediating the dissolution of stress granules: during stressful conditions, DYRK3 partitions from the cytosol to the stress granule, together with mTORC1 components, which prevents mTORC1 signaling. When stress signals are gone, the kinase activity of DYRK3 is required for the dissolution of stress granule and mTORC1 relocation to the cytosol: acts by mediating the phosphorylation of the mTORC1 inhibitor AKT1S1, allowing full reactivation of mTORC1 signaling. Also acts as a negative regulator of EPO-dependent erythropoiesis: may place an upper limit on red cell production during stress erythropoiesis. Inhibits cell death due to cytokine withdrawal in hematopoietic progenitor cells. Promotes cell survival upon genotoxic stress through phosphorylation of SIRT1: this in turn inhibits p53/TP53 activity and apoptosis. The protein is Dual specificity tyrosine-phosphorylation-regulated kinase 3 of Rattus norvegicus (Rat).